Here is a 168-residue protein sequence, read N- to C-terminus: Large ribosomal subunit protein uL10 (168 aa).

It belongs to the universal ribosomal protein uL10 family. Part of the ribosomal stalk of the 50S ribosomal subunit. The N-terminus interacts with L11 and the large rRNA to form the base of the stalk. The C-terminus forms an elongated spine to which L12 dimers bind in a sequential fashion forming a multimeric L10(L12)X complex.

Functionally, forms part of the ribosomal stalk, playing a central role in the interaction of the ribosome with GTP-bound translation factors. The polypeptide is Large ribosomal subunit protein uL10 (Photorhabdus laumondii subsp. laumondii (strain DSM 15139 / CIP 105565 / TT01) (Photorhabdus luminescens subsp. laumondii)).